The sequence spans 337 residues: tRNA N6-adenosine threonylcarbamoyltransferase (337 aa).

The Fe cation site is built by histidine 114 and histidine 118. Substrate contacts are provided by residues 136-140 (LVSGG), aspartate 169, glycine 182, aspartate 186, and asparagine 275. Aspartate 301 lines the Fe cation pocket.

Belongs to the KAE1 / TsaD family. Fe(2+) is required as a cofactor.

Its subcellular location is the cytoplasm. It carries out the reaction L-threonylcarbamoyladenylate + adenosine(37) in tRNA = N(6)-L-threonylcarbamoyladenosine(37) in tRNA + AMP + H(+). Its function is as follows. Required for the formation of a threonylcarbamoyl group on adenosine at position 37 (t(6)A37) in tRNAs that read codons beginning with adenine. Is involved in the transfer of the threonylcarbamoyl moiety of threonylcarbamoyl-AMP (TC-AMP) to the N6 group of A37, together with TsaE and TsaB. TsaD likely plays a direct catalytic role in this reaction. This Streptococcus thermophilus (strain ATCC BAA-491 / LMD-9) protein is tRNA N6-adenosine threonylcarbamoyltransferase.